Here is a 207-residue protein sequence, read N- to C-terminus: Putative acetyltransferase C18B11.09c (207 aa).

The protein belongs to the transferase hexapeptide repeat family.

The polypeptide is Putative acetyltransferase C18B11.09c (Schizosaccharomyces pombe (strain 972 / ATCC 24843) (Fission yeast)).